The following is a 319-amino-acid chain: Ornithine carbamoyltransferase (319 aa).

Residues 63-66 (STRT), glutamine 90, arginine 114, and 141-144 (HPCQ) each bind carbamoyl phosphate. Residues asparagine 172, aspartate 236, and 240–241 (SM) contribute to the L-ornithine site. Residues 276–277 (CL) and arginine 304 each bind carbamoyl phosphate.

Belongs to the aspartate/ornithine carbamoyltransferase superfamily. OTCase family.

The protein resides in the cytoplasm. The catalysed reaction is carbamoyl phosphate + L-ornithine = L-citrulline + phosphate + H(+). Its pathway is amino-acid biosynthesis; L-arginine biosynthesis; L-arginine from L-ornithine and carbamoyl phosphate: step 1/3. In terms of biological role, reversibly catalyzes the transfer of the carbamoyl group from carbamoyl phosphate (CP) to the N(epsilon) atom of ornithine (ORN) to produce L-citrulline. This Halalkalibacterium halodurans (strain ATCC BAA-125 / DSM 18197 / FERM 7344 / JCM 9153 / C-125) (Bacillus halodurans) protein is Ornithine carbamoyltransferase.